Consider the following 180-residue polypeptide: Inner membrane assembly complex subunit 17 (180 aa).

A mitochondrion-targeting transit peptide spans 1–36 (MMIRNQLYRKCIIGGGRSILNGWVINGTVPNIGLRY). Residues 37–105 (LRSGIVTRSN…RKTQDIPIKR (69 aa)) lie on the Mitochondrial matrix side of the membrane. Residues 106–128 (FIRPTWMFLLMSSTFYLLGHYIW) traverse the membrane as a helical segment. A coiled-coil region spans residues 129–163 (WKLEYDEVEKELDRQVTALEEELHNLIEEHRVHGE). Topologically, residues 129–180 (WKLEYDEVEKELDRQVTALEEELHNLIEEHRVHGENEAIKNKKHKHWYKFWS) are mitochondrial intermembrane.

It belongs to the INA17 family. Component of the inner membrane assembly (INA) complex, composed of INA17 and INA22. Interacts with a subset of F(1)F(0)-ATP synthase subunits of the F(1)-domain and the peripheral stalk.

It localises to the mitochondrion inner membrane. Component of the INA complex (INAC) that promotes the biogenesis of mitochondrial F(1)F(0)-ATP synthase. INAC facilitates the assembly of the peripheral stalk and promotes the assembly of the catalytic F(1)-domain with the membrane-embedded F(0)-domain. In Vanderwaltozyma polyspora (strain ATCC 22028 / DSM 70294 / BCRC 21397 / CBS 2163 / NBRC 10782 / NRRL Y-8283 / UCD 57-17) (Kluyveromyces polysporus), this protein is Inner membrane assembly complex subunit 17.